The sequence spans 100 residues: Small ribosomal subunit protein bS6 (100 aa).

Belongs to the bacterial ribosomal protein bS6 family.

Its function is as follows. Binds together with bS18 to 16S ribosomal RNA. The polypeptide is Small ribosomal subunit protein bS6 (Tropheryma whipplei (strain TW08/27) (Whipple's bacillus)).